Consider the following 294-residue polypeptide: Ankyrin repeat and SOCS box protein 9 (294 aa).

Methionine 1 is modified (N-acetylmethionine). ANK repeat units follow at residues 35–64 (SDWSPMHEAAIHGHQLSLRNLISQGWAVNI), 68–97 (DHVSPLHEACLGGHLSCVKILLKHGAQVNG), 101–130 (DWHTPLFNACVSGSWDCVNLLLQHGASVQP), 133–162 (DLASPIHEAARRGHVECVNSLIAYGGNIDH), 166–195 (HLGTPLYLACENQQRACVKKLLESGADVNQ), and 198–227 (GQDSPLHAVARTASEELACLLMDFGADTQA). Position 51 is a phosphoserine (serine 51). The region spanning 240–294 (PPESPLAQLFLEREGPPSLMQLCRLRIRKCFGIQQHHKITKLVLPEDLKQFLLHL) is the SOCS box domain.

It belongs to the ankyrin SOCS box (ASB) family. In terms of assembly, substrate-recognition component of the ECS(ASB9) complex, composed of ASB9, CUL5, ELOB, ELOC and RNF7/RBX2. As to expression, predominantly expressed in testis, kidney, and liver.

Its subcellular location is the mitochondrion. Its pathway is protein modification; protein ubiquitination. In terms of biological role, substrate-recognition component of a cullin-5-RING E3 ubiquitin-protein ligase complex (ECS complex, also named CRL5 complex), which mediates the ubiquitination and subsequent proteasomal degradation of target proteins. The ECS(ASB9) complex catalyzes ubiquitination of creatine kinases CKB and CKMT1A. Does not interact with the Elongin BC complex, likely to be a negative regulator of isoform 1. This Homo sapiens (Human) protein is Ankyrin repeat and SOCS box protein 9.